We begin with the raw amino-acid sequence, 546 residues long: Chaperonin GroEL (546 aa).

ATP-binding positions include threonine 29–proline 32, aspartate 86–threonine 90, glycine 413, asparagine 476–alanine 478, and aspartate 492. The disordered stretch occupies residues arginine 521–methionine 546.

This sequence belongs to the chaperonin (HSP60) family. In terms of assembly, forms a cylinder of 14 subunits composed of two heptameric rings stacked back-to-back. Interacts with the co-chaperonin GroES.

It is found in the cytoplasm. The enzyme catalyses ATP + H2O + a folded polypeptide = ADP + phosphate + an unfolded polypeptide.. Together with its co-chaperonin GroES, plays an essential role in assisting protein folding. The GroEL-GroES system forms a nano-cage that allows encapsulation of the non-native substrate proteins and provides a physical environment optimized to promote and accelerate protein folding. This is Chaperonin GroEL from Tetragenococcus halophilus (Pediococcus halophilus).